Consider the following 737-residue polypeptide: Ribosome-releasing factor 2, mitochondrial (737 aa).

Residues 1–29 (MLKYALHSGGMPRNRLLRQLSAYIFRRSY) constitute a mitochondrion transit peptide. One can recognise a tr-type G domain in the interval 31 to 310 (SNIRNIGILA…AVNTYLPAPE (280 aa)). GTP is bound by residues 40–47 (AHIDAGKT), 104–108 (DTPGH), and 158–161 (NKMD).

This sequence belongs to the TRAFAC class translation factor GTPase superfamily. Classic translation factor GTPase family. EF-G/EF-2 subfamily.

The protein resides in the mitochondrion. Mitochondrial GTPase that mediates the disassembly of ribosomes from messenger RNA at the termination of mitochondrial protein biosynthesis. Not involved in the GTP-dependent ribosomal translocation step during translation elongation. The sequence is that of Ribosome-releasing factor 2, mitochondrial from Drosophila persimilis (Fruit fly).